A 121-amino-acid polypeptide reads, in one-letter code: MVDMMDLPRSRINAGMLAQFIDKPVCFVGRLEKIHPTGKMFILSDGEGKNGTIELMEPLDEEISGIVEVVGRVTAKATILCTSYVQFKEDSHPFDLGLYNEAVKIIHDFPQFYPLGIVQHD.

Val2 carries the post-translational modification N-acetylvaline. Residues Lys23, Lys39, and Lys88 each participate in a glycyl lysine isopeptide (Lys-Gly) (interchain with G-Cter in ubiquitin) cross-link.

This sequence belongs to the replication factor A protein 3 family. In terms of assembly, component of the canonical replication protein A complex (RPA), a heterotrimer composed of RPA1, RPA2 and RPA3. Also a component of the aRPA, the alternative replication protein A complex, a trimeric complex similar to the replication protein A complex/RPA but where RPA1 and RPA3 are associated with RPA4 instead of RPA2. Interacts with BRIP1/FANCJ via the RPA1 subunit; following DNA damage they colocalize in foci in the nucleus. Ubiquitinated by RFWD3 at stalled replication forks in response to DNA damage: ubiquitination by RFWD3 does not lead to degradation by the proteasome and promotes removal of the RPA complex from stalled replication forks, promoting homologous recombination.

The protein localises to the nucleus. In terms of biological role, as part of the heterotrimeric replication protein A complex (RPA/RP-A), binds and stabilizes single-stranded DNA intermediates that form during DNA replication or upon DNA stress. It prevents their reannealing and in parallel, recruits and activates different proteins and complexes involved in DNA metabolism. Thereby, it plays an essential role both in DNA replication and the cellular response to DNA damage. In the cellular response to DNA damage, the RPA complex controls DNA repair and DNA damage checkpoint activation. Through recruitment of ATRIP activates the ATR kinase a master regulator of the DNA damage response. It is required for the recruitment of the DNA double-strand break repair factors RAD51 and RAD52 to chromatin, in response to DNA damage. Also recruits to sites of DNA damage proteins like XPA and XPG that are involved in nucleotide excision repair and is required for this mechanism of DNA repair. Also plays a role in base excision repair (BER), probably through interaction with UNG. RPA stimulates 5'-3' helicase activity of BRIP1/FANCJ. Also recruits SMARCAL1/HARP, which is involved in replication fork restart, to sites of DNA damage. May also play a role in telomere maintenance. RPA3 has its own single-stranded DNA-binding activity and may be responsible for polarity of the binding of the complex to DNA. As part of the alternative replication protein A complex, aRPA, binds single-stranded DNA and probably plays a role in DNA repair. Compared to the RPA2-containing, canonical RPA complex, may not support chromosomal DNA replication and cell cycle progression through S-phase. The aRPA may not promote efficient priming by DNA polymerase alpha but could support DNA synthesis by polymerase delta in presence of PCNA and replication factor C (RFC), the dual incision/excision reaction of nucleotide excision repair and RAD51-dependent strand exchange. This chain is Replication protein A 14 kDa subunit (RPA3), found in Homo sapiens (Human).